Consider the following 107-residue polypeptide: Pyrimidine/purine nucleoside phosphorylase (107 aa).

This sequence belongs to the nucleoside phosphorylase PpnP family.

It carries out the reaction a purine D-ribonucleoside + phosphate = a purine nucleobase + alpha-D-ribose 1-phosphate. The enzyme catalyses adenosine + phosphate = alpha-D-ribose 1-phosphate + adenine. It catalyses the reaction cytidine + phosphate = cytosine + alpha-D-ribose 1-phosphate. The catalysed reaction is guanosine + phosphate = alpha-D-ribose 1-phosphate + guanine. It carries out the reaction inosine + phosphate = alpha-D-ribose 1-phosphate + hypoxanthine. The enzyme catalyses thymidine + phosphate = 2-deoxy-alpha-D-ribose 1-phosphate + thymine. It catalyses the reaction uridine + phosphate = alpha-D-ribose 1-phosphate + uracil. The catalysed reaction is xanthosine + phosphate = alpha-D-ribose 1-phosphate + xanthine. Functionally, catalyzes the phosphorolysis of diverse nucleosides, yielding D-ribose 1-phosphate and the respective free bases. Can use uridine, adenosine, guanosine, cytidine, thymidine, inosine and xanthosine as substrates. Also catalyzes the reverse reactions. In Aromatoleum aromaticum (strain DSM 19018 / LMG 30748 / EbN1) (Azoarcus sp. (strain EbN1)), this protein is Pyrimidine/purine nucleoside phosphorylase.